The following is a 600-amino-acid chain: Pyranose dehydrogenase 2 (600 aa).

Positions Met1–Gly25 are cleaved as a signal peptide. 2 N-linked (GlcNAc...) asparagine glycosylation sites follow: Asn99 and Asn114. Residue His127 is modified to Tele-8alpha-FAD histidine. Asn199, Asn275, and Asn342 each carry an N-linked (GlcNAc...) asparagine glycan. Catalysis depends on His535, which acts as the Proton acceptor. The active site involves His579.

The protein belongs to the GMC oxidoreductase family. In terms of assembly, monomer. FAD serves as cofactor. Post-translationally, N-glycosylated.

Its subcellular location is the secreted. The enzyme catalyses pyranose + acceptor = pyranos-2-ulose + reduced acceptor.. It catalyses the reaction pyranose + acceptor = pyranos-3-ulose + reduced acceptor.. It carries out the reaction pyranose + acceptor = pyranos-2,3-diulose + reduced acceptor.. The catalysed reaction is a pyranoside + acceptor = a pyranosid-3-ulose + reduced acceptor.. The enzyme catalyses a pyranoside + acceptor = a pyranosid-3,4-diulose + reduced acceptor.. Catalyzes the single-oxidation or sequential double oxidation reaction of carbohydrates primarily at carbon-2 and/or carbon-3 with the concomitant reduction of the flavin. The enzyme exhibits a broad sugar substrate specificity, oxidizing different aldopyranoses to the corresponding C-1, C-2, C-3 or C-1,2, C-2,3 and C-3,4 (di)dehydro sugars with substrate-specific regioselectivity. Accepts only a narrow range of electron acceptors such as substituted benzoquinones and complexed metal ions and reacts extremely slowly with O(2) as acceptor. May play a role in the natural recycling of plant matter by oxidizing all major monosaccharides in lignocellulose and by reducing quinone compounds or reactive radical species generated during lignin depolymerization. This chain is Pyranose dehydrogenase 2, found in Leucoagaricus meleagris (Western flat-topped agaric).